Reading from the N-terminus, the 764-residue chain is 5-methyltetrahydropteroyltriglutamate--homocysteine methyltransferase (764 aa).

Residues 16–19 (RELK) and Lys121 contribute to the 5-methyltetrahydropteroyltri-L-glutamate site. L-homocysteine is bound by residues 440–442 (IGS) and Glu493. Residues 440–442 (IGS) and Glu493 each bind L-methionine. Residues 524-525 (RC) and Trp570 contribute to the 5-methyltetrahydropteroyltri-L-glutamate site. Position 608 (Asp608) interacts with L-homocysteine. Position 608 (Asp608) interacts with L-methionine. Glu614 is a 5-methyltetrahydropteroyltri-L-glutamate binding site. The Zn(2+) site is built by His650, Cys652, and Glu674. Residue His703 is the Proton donor of the active site. Position 735 (Cys735) interacts with Zn(2+).

Belongs to the vitamin-B12 independent methionine synthase family. Zn(2+) is required as a cofactor.

It catalyses the reaction 5-methyltetrahydropteroyltri-L-glutamate + L-homocysteine = tetrahydropteroyltri-L-glutamate + L-methionine. The protein operates within amino-acid biosynthesis; L-methionine biosynthesis via de novo pathway; L-methionine from L-homocysteine (MetE route): step 1/1. Functionally, catalyzes the transfer of a methyl group from 5-methyltetrahydrofolate to homocysteine resulting in methionine formation. In Burkholderia ambifaria (strain MC40-6), this protein is 5-methyltetrahydropteroyltriglutamate--homocysteine methyltransferase.